A 149-amino-acid chain; its full sequence is Transcriptional repressor NrdR (149 aa).

A zinc finger lies at 3–34 (CPYCSYEESKVVDSRSAEDYNAIRRRRECLRC). The ATP-cone domain occupies 49-139 (ILVIKKDLSR…VYRQFKDINT (91 aa)).

Belongs to the NrdR family. Zn(2+) serves as cofactor.

Its function is as follows. Negatively regulates transcription of bacterial ribonucleotide reductase nrd genes and operons by binding to NrdR-boxes. The polypeptide is Transcriptional repressor NrdR (Clostridium perfringens (strain ATCC 13124 / DSM 756 / JCM 1290 / NCIMB 6125 / NCTC 8237 / Type A)).